A 264-amino-acid chain; its full sequence is MSWLEAMILGLIQGLTEYLPVSSSGHLAIGSALFGIQGEENLAFTIVVHVATVCSTLVILWKEIDWIFKGLFKFQMNDETRYVINIVISMIPIGIVGVFFKDYVEAIFGSGLMIVGCMLLLTAALLSFSYYYKPRQKDKISMKDAFIIGLAQACAVLPGLSRSGSTIATGLLLGDNKAKLAQFSFLMVIPPILGEALLDSVKMMKGEDVVGDIPALSLIVGFLAAFVAGCLACKWMINIVKKGKLIYFAIYCAIAGLAVIITQL.

Helical transmembrane passes span Asn-41–Trp-61, Tyr-82–Asp-102, Ala-106–Leu-126, Ile-140–Leu-160, Ile-213–Cys-233, and Lys-244–Leu-264.

It belongs to the UppP family.

It localises to the cell inner membrane. The catalysed reaction is di-trans,octa-cis-undecaprenyl diphosphate + H2O = di-trans,octa-cis-undecaprenyl phosphate + phosphate + H(+). Functionally, catalyzes the dephosphorylation of undecaprenyl diphosphate (UPP). Confers resistance to bacitracin. This chain is Undecaprenyl-diphosphatase, found in Bacteroides thetaiotaomicron (strain ATCC 29148 / DSM 2079 / JCM 5827 / CCUG 10774 / NCTC 10582 / VPI-5482 / E50).